The primary structure comprises 266 residues: 4-hydroxy-tetrahydrodipicolinate reductase (266 aa).

Residue 10–15 participates in NAD(+) binding; that stretch reads GPRGRM. NADP(+) is bound at residue lysine 38. NAD(+)-binding positions include 99-101 and 125-128; these read GTT and APNF. Histidine 155 serves as the catalytic Proton donor/acceptor. A (S)-2,3,4,5-tetrahydrodipicolinate-binding site is contributed by histidine 156. Lysine 159 functions as the Proton donor in the catalytic mechanism. Position 165-166 (165-166) interacts with (S)-2,3,4,5-tetrahydrodipicolinate; the sequence is GT.

This sequence belongs to the DapB family.

The protein localises to the cytoplasm. The enzyme catalyses (S)-2,3,4,5-tetrahydrodipicolinate + NAD(+) + H2O = (2S,4S)-4-hydroxy-2,3,4,5-tetrahydrodipicolinate + NADH + H(+). The catalysed reaction is (S)-2,3,4,5-tetrahydrodipicolinate + NADP(+) + H2O = (2S,4S)-4-hydroxy-2,3,4,5-tetrahydrodipicolinate + NADPH + H(+). It functions in the pathway amino-acid biosynthesis; L-lysine biosynthesis via DAP pathway; (S)-tetrahydrodipicolinate from L-aspartate: step 4/4. Catalyzes the conversion of 4-hydroxy-tetrahydrodipicolinate (HTPA) to tetrahydrodipicolinate. This chain is 4-hydroxy-tetrahydrodipicolinate reductase, found in Bacillus cereus (strain ATCC 14579 / DSM 31 / CCUG 7414 / JCM 2152 / NBRC 15305 / NCIMB 9373 / NCTC 2599 / NRRL B-3711).